The following is a 514-amino-acid chain: L-Threonine dehydratase biosynthetic IlvA (514 aa).

Lysine 62 bears the N6-(pyridoxal phosphate)lysine mark. Pyridoxal 5'-phosphate-binding positions include asparagine 89, 188–192, and serine 315; that span reads GGGGL. ACT-like domains follow at residues 339 to 411 and 434 to 504; these read ALLA…DLSD and RLYS…DESN.

It belongs to the serine/threonine dehydratase family. As to quaternary structure, homotetramer. It depends on pyridoxal 5'-phosphate as a cofactor.

The enzyme catalyses L-threonine = 2-oxobutanoate + NH4(+). It functions in the pathway amino-acid biosynthesis; L-isoleucine biosynthesis; 2-oxobutanoate from L-threonine: step 1/1. Isoleucine allosterically inhibits whereas valine allosterically activates this enzyme. In terms of biological role, catalyzes the anaerobic formation of alpha-ketobutyrate and ammonia from threonine in a two-step reaction. The first step involved a dehydration of threonine and a production of enamine intermediates (aminocrotonate), which tautomerizes to its imine form (iminobutyrate). Both intermediates are unstable and short-lived. The second step is the nonenzymatic hydrolysis of the enamine/imine intermediates to form 2-ketobutyrate and free ammonia. In the low water environment of the cell, the second step is accelerated by RidA. The polypeptide is L-Threonine dehydratase biosynthetic IlvA (ilvA) (Salmonella typhimurium (strain LT2 / SGSC1412 / ATCC 700720)).